Consider the following 730-residue polypeptide: Jacalin-related lectin 5 (730 aa).

Residues 1 to 126 form the Jacalin-type lectin 1 domain; the sequence is MSWDDGKHTK…LNSIDAHFAP (126 aa). The disordered stretch occupies residues 121-450; that stretch reads DAHFAPAPPP…GNQWDDGTDH (330 aa). Low complexity-rich tracts occupy residues 138-153, 168-179, 196-207, and 248-261; these read GASGIGSDSGSIGSAG, AGGSKPSSGSAG, and TEKNAGGSKSSSGS. Residues 275–307 show a composition bias toward polar residues; the sequence is ETVSNIGDTESNAGGSKSNDGANNGASGIESNA. Residues 314–323 are compositionally biased toward gly residues; the sequence is FGAGGTGGIG. The span at 343–358 shows a compositional bias: low complexity; that stretch reads DGASGIGSNDGSTGTN. Polar residues-rich tracts occupy residues 366 to 375 and 388 to 416; these read DSNIEGTENN and IGNSDGSTGTSPEGTESNADGTKTNTGGK. Residues 417-429 show a composition bias toward low complexity; that stretch reads ESNTGSESNTNSS. Jacalin-type lectin domains lie at 430–572 and 584–727; these read PQKL…YFVP and PNKV…YFIP.

This sequence belongs to the jacalin lectin family.

In Arabidopsis thaliana (Mouse-ear cress), this protein is Jacalin-related lectin 5 (JAL5).